The chain runs to 276 residues: Type III pantothenate kinase (276 aa).

An ATP-binding site is contributed by 18-25; the sequence is EIGNSRLH. Residues Y116 and 120–123 contribute to the substrate site; that span reads GIDR. Catalysis depends on D122, which acts as the Proton acceptor. D142 provides a ligand contact to K(+). T145 contacts ATP. Residue T200 participates in substrate binding.

The protein belongs to the type III pantothenate kinase family. As to quaternary structure, homodimer. It depends on NH4(+) as a cofactor. K(+) serves as cofactor.

The protein localises to the cytoplasm. The catalysed reaction is (R)-pantothenate + ATP = (R)-4'-phosphopantothenate + ADP + H(+). Its pathway is cofactor biosynthesis; coenzyme A biosynthesis; CoA from (R)-pantothenate: step 1/5. Catalyzes the phosphorylation of pantothenate (Pan), the first step in CoA biosynthesis. In Nostoc sp. (strain PCC 7120 / SAG 25.82 / UTEX 2576), this protein is Type III pantothenate kinase.